We begin with the raw amino-acid sequence, 421 residues long: D-aspartate ligase (421 aa).

Residues 130–332 enclose the ATP-grasp domain; that stretch reads YEVCEEYDLP…LARFVTEDRV (203 aa). 161 to 224 is an ATP binding site; it reads PFEFPVALKP…QDFIPGDDSN (64 aa). Positions 290, 304, and 306 each coordinate Mg(2+).

It depends on Mg(2+) as a cofactor.

It carries out the reaction [beta-GlcNAc-(1-&gt;4)-Mur2Ac(oyl-L-Ala-gamma-D-Glu-L-Lys-D-Ala-D-Ala)](n) + n D-aspartate + n ATP = [beta-GlcNAc-(1-&gt;4)-Mur2Ac(oyl-L-Ala-gamma-D-Glu-6-N-(beta-D-Asp)-L-Lys-D-Ala-D-Ala)]n + n ADP + n phosphate + n H(+). It participates in cell wall biogenesis; peptidoglycan biosynthesis. Its function is as follows. Catalyzes the addition of D-aspartate onto the lysine residue in the peptidoglycan precursor UDP-MurNAc-pentapeptide. The ligation occurs between the beta-carboxylate of D-Asp and the epsilon-amino group of L-Lys. Is highly specific for D-aspartate, as L-aspartate, D-glutamate, D-alanine, D-iso-asparagine and D-malate are not substrates. This is D-aspartate ligase from Enterococcus faecium (strain Aus0004).